Reading from the N-terminus, the 342-residue chain is Protein RecA (342 aa).

It belongs to the RecA family.

The protein localises to the cytoplasm. In terms of biological role, can catalyze the hydrolysis of ATP in the presence of single-stranded DNA, the ATP-dependent uptake of single-stranded DNA by duplex DNA, and the ATP-dependent hybridization of homologous single-stranded DNAs. It interacts with LexA causing its activation and leading to its autocatalytic cleavage. The chain is Protein RecA from Pectobacterium carotovorum (Erwinia carotovora).